A 253-amino-acid polypeptide reads, in one-letter code: Tryptophan synthase alpha chain (253 aa).

Residues glutamate 47 and aspartate 58 each act as proton acceptor in the active site.

Belongs to the TrpA family. As to quaternary structure, tetramer of two alpha and two beta chains.

The catalysed reaction is (1S,2R)-1-C-(indol-3-yl)glycerol 3-phosphate + L-serine = D-glyceraldehyde 3-phosphate + L-tryptophan + H2O. It participates in amino-acid biosynthesis; L-tryptophan biosynthesis; L-tryptophan from chorismate: step 5/5. Its function is as follows. The alpha subunit is responsible for the aldol cleavage of indoleglycerol phosphate to indole and glyceraldehyde 3-phosphate. The polypeptide is Tryptophan synthase alpha chain (Syntrophotalea carbinolica (strain DSM 2380 / NBRC 103641 / GraBd1) (Pelobacter carbinolicus)).